Here is an 865-residue protein sequence, read N- to C-terminus: Envelope glycoprotein gp160 (865 aa).

The signal sequence occupies residues 1–20 (MRYTIITLGIIVIGIGIVLS). Residues 21 to 705 (KQWITVFYGI…SKWLNILKMG (685 aa)) are Extracellular-facing. Asparagine 35 carries an N-linked (GlcNAc...) asparagine; by host glycan. Residues cysteine 42 and cysteine 55 are joined by a disulfide bond. 20 N-linked (GlcNAc...) asparagine; by host glycosylation sites follow: asparagine 68, asparagine 117, asparagine 150, asparagine 165, asparagine 195, asparagine 198, asparagine 210, asparagine 252, asparagine 255, asparagine 266, asparagine 276, asparagine 282, asparagine 294, asparagine 306, asparagine 316, asparagine 373, asparagine 414, asparagine 451, asparagine 488, and asparagine 491. Cystine bridges form between cysteine 101-cysteine 218, cysteine 108-cysteine 209, cysteine 113-cysteine 166, cysteine 231-cysteine 261, and cysteine 241-cysteine 253. A V1 region spans residues 113–165 (CVELNSTRERATTPTTTPKSTGLPCVGPTSGENLQSCNASIIEREMEDEPASN). Residues 166-209 (CTFAMAGYVRDQKKNYYSVVWNDAEIYCKNKTNSTSKECYMIHC) form a V2 region. Residues 311-343 (CRRPGNKTVLPVTIMAGLVFHSQKYNMKLRQAW) are V3. A disulfide bridge connects residues cysteine 311 and cysteine 344. Residues cysteine 396 and cysteine 471 are joined by a disulfide bond. Residues 403–444 (CKMDWFLNYLNNKTWDAYHNFCSSKKKGHAPGPCVQRTYVAY) form a V4 region. Positions 487 to 494 (KNRTNVTL) are V5. Positions 537 to 557 (VPFVLGFLGFLGAAGTAMGAA) are fusion peptide. The segment at 600 to 616 (LNARVTALEKYLEDQAR) is immunosuppression. N-linked (GlcNAc...) asparagine; by host glycans are attached at residues asparagine 645 and asparagine 661. Positions 650–675 (EWERQIADLESNITGQLVKAREQEEK) form a coiled coil. Positions 682–703 (KLTSWSDFWSWFDFSKWLNILK) are MPER; binding to GalCer. Residues 706 to 726 (FLVIVGIIGLRLLYTVYGCIV) form a helical membrane-spanning segment. At 727–865 (RVRQGYVPLS…VRQGLEEILN (139 aa)) the chain is on the cytoplasmic side. The YXXL motif; contains endocytosis signal signature appears at 732–735 (YVPL). The disordered stretch occupies residues 744-763 (VGKGRPDNADEPGEGGDNSR).

The mature envelope protein (Env) consists of a homotrimer of non-covalently associated gp120-gp41 heterodimers. The resulting complex protrudes from the virus surface as a spike. Interacts with host CD4 and CCR5. Gp120 also interacts with the C-type lectins CD209/DC-SIGN and CLEC4M/DC-SIGNR (collectively referred to as DC-SIGN(R)). As to quaternary structure, the mature envelope protein (Env) consists of a homotrimer of non-covalently associated gp120-gp41 heterodimers. The resulting complex protrudes from the virus surface as a spike. Post-translationally, specific enzymatic cleavages in vivo yield mature proteins. Envelope glycoproteins are synthesized as an inactive precursor that is heavily N-glycosylated and processed likely by host cell furin in the Golgi to yield the mature SU and TM proteins. The cleavage site between SU and TM requires the minimal sequence [KR]-X-[KR]-R.

The protein localises to the virion membrane. It localises to the host cell membrane. Its subcellular location is the host endosome membrane. Functionally, the surface protein gp120 (SU) attaches the virus to the host lymphoid cell by binding to the primary receptor CD4. This interaction induces a structural rearrangement creating a high affinity binding site for a chemokine coreceptor like CCR5. This peculiar 2 stage receptor-interaction strategy allows gp120 to maintain the highly conserved coreceptor-binding site in a cryptic conformation, protected from neutralizing antibodies. These changes are transmitted to the transmembrane protein gp41 and are thought to activate its fusogenic potential by unmasking its fusion peptide. In terms of biological role, surface protein gp120 (SU) may target the virus to gut-associated lymphoid tissue (GALT) by binding host ITGA4/ITGB7 (alpha-4/beta-7 integrins), a complex that mediates T-cell migration to the GALT. Interaction between gp120 and ITGA4/ITGB7 would allow the virus to enter GALT early in the infection, infecting and killing most of GALT's resting CD4+ T-cells. This T-cell depletion is believed to be the major insult to the host immune system leading to AIDS. Its function is as follows. The surface protein gp120 is a ligand for CD209/DC-SIGN and CLEC4M/DC-SIGNR, which are respectively found on dendritic cells (DCs), and on endothelial cells of liver sinusoids and lymph node sinuses. These interactions allow capture of viral particles at mucosal surfaces by these cells and subsequent transmission to permissive cells. DCs are professional antigen presenting cells, critical for host immunity by inducing specific immune responses against a broad variety of pathogens. They act as sentinels in various tissues where they take up antigen, process it, and present it to T-cells following migration to lymphoid organs. SIV subverts the migration properties of dendritic cells to gain access to CD4+ T-cells in lymph nodes. Virus transmission to permissive T-cells occurs either in trans (without DCs infection, through viral capture and transmission), or in cis (following DCs productive infection, through the usual CD4-gp120 interaction), thereby inducing a robust infection. In trans infection, bound virions remain infectious over days and it is proposed that they are not degraded, but protected in non-lysosomal acidic organelles within the DCs close to the cell membrane thus contributing to the viral infectious potential during DCs' migration from the periphery to the lymphoid tissues. On arrival at lymphoid tissues, intact virions recycle back to DCs' cell surface allowing virus transmission to CD4+ T-cells. Virion capture also seems to lead to MHC-II-restricted viral antigen presentation, and probably to the activation of SIV-specific CD4+ cells. The transmembrane protein gp41 (TM) acts as a class I viral fusion protein. Under the current model, the protein has at least 3 conformational states: pre-fusion native state, pre-hairpin intermediate state, and post-fusion hairpin state. During fusion of viral and target intracellular membranes, the coiled coil regions (heptad repeats) assume a trimer-of-hairpins structure, positioning the fusion peptide in close proximity to the C-terminal region of the ectodomain. The formation of this structure appears to drive apposition and subsequent fusion of viral and target cell membranes. Complete fusion occurs in host cell endosomes. The virus undergoes clathrin-dependent internalization long before endosomal fusion, thus minimizing the surface exposure of conserved viral epitopes during fusion and reducing the efficacy of inhibitors targeting these epitopes. Membranes fusion leads to delivery of the nucleocapsid into the cytoplasm. Functionally, the envelope glycoprotein gp160 precursor down-modulates cell surface CD4 antigen by interacting with it in the endoplasmic reticulum and blocking its transport to the cell surface. In terms of biological role, the gp120-gp41 heterodimer allows rapid transcytosis of the virus through CD4 negative cells such as simple epithelial monolayers of the intestinal, rectal and endocervical epithelial barriers. Both gp120 and gp41 specifically recognize glycosphingolipids galactosyl-ceramide (GalCer) or 3' sulfo-galactosyl-ceramide (GalS) present in the lipid rafts structures of epithelial cells. Binding to these alternative receptors allows the rapid transcytosis of the virus through the epithelial cells. This transcytotic vesicle-mediated transport of virions from the apical side to the basolateral side of the epithelial cells does not involve infection of the cells themselves. The sequence is that of Envelope glycoprotein gp160 (env) from Simian immunodeficiency virus agm.vervet (isolate AGM TYO-1) (SIV-agm.ver).